The chain runs to 473 residues: MIKEALIVKTTALPQSRIALELEIPSNTCKSFVSETINSISRSAKIPGFRLGKIPKQVLIQRIGINQLYASALEKIIDKSWKEAIEMESIEPLSEPELVDGFESLLKNFNPEKTLKINLQTDVAPTLKLKKSKGLSVEIIKRKFDPKSIDEALEKSRNQLANIIPVINRPARLGDIAVVSFKGIYKDSKKAIDGGSSDSMDLELEKNKMIPGFVEGIVGMKIDDNKTLNLKFPDDYSHEESRGKEAIFEVSLKDLKEKELPELNDDFAKQSGNKDSLKELKKDIEKQLKENFDNTQKNIKIEALMDALSKELDAEIPKAMIDIEVRNNIEQTAQRFAQQGMDIKSTFTPELVKTLAESTRPQAEKNVQRNLALKALSESENITVEDKEINQKMKEYDDEISKSQKQIDIQKLKEVVLNDLLKEKLITWLEENSTVKEISEKVTKSTTKSKTKSKTKKESQAKSEPNKKKKEKK.

The region spanning 174–261 (GDIAVVSFKG…LKDLKEKELP (88 aa)) is the PPIase FKBP-type domain. The segment at 437–473 (EISEKVTKSTTKSKTKSKTKKESQAKSEPNKKKKEKK) is disordered. A compositionally biased stretch (basic and acidic residues) spans 456-466 (KKESQAKSEPN).

It belongs to the FKBP-type PPIase family. Tig subfamily.

The protein resides in the cytoplasm. The enzyme catalyses [protein]-peptidylproline (omega=180) = [protein]-peptidylproline (omega=0). Involved in protein export. Acts as a chaperone by maintaining the newly synthesized protein in an open conformation. Functions as a peptidyl-prolyl cis-trans isomerase. The polypeptide is Trigger factor (Prochlorococcus marinus (strain MIT 9515)).